Consider the following 404-residue polypeptide: Sulfate adenylyltransferase (404 aa).

It belongs to the sulfate adenylyltransferase family.

It catalyses the reaction sulfate + ATP + H(+) = adenosine 5'-phosphosulfate + diphosphate. It participates in sulfur metabolism; hydrogen sulfide biosynthesis; sulfite from sulfate: step 1/3. In Chlorobaculum tepidum (strain ATCC 49652 / DSM 12025 / NBRC 103806 / TLS) (Chlorobium tepidum), this protein is Sulfate adenylyltransferase.